The following is a 315-amino-acid chain: FAD-linked oxidoreductase sthB (315 aa).

The FAD-binding PCMH-type domain maps to 19–201; that stretch reads QPCSLGNYVS…LSMTSRVHAD (183 aa).

It belongs to the oxygen-dependent FAD-linked oxidoreductase family.

It carries out the reaction betaenone C = betaenone A. The catalysed reaction is stemphyloxin I = stemphyloxin II. The protein operates within mycotoxin biosynthesis. Functionally, FAD-linked oxidoreductase; part of the gene cluster that mediates the biosynthesis of the phytotoxin stemphyloxin II. The first step of the pathway is the synthesis of dehydroprobetaenone I by the polyketide synthase sthA and the enoyl reductase sthE via condensation of one acetyl-CoA starter unit with 7 malonyl-CoA units and 5 methylations. The C-terminal reductase (R) domain of sthA catalyzes the reductive release of the polyketide chain. Because sthA lacks a designated enoylreductase (ER) domain, the required activity is provided the enoyl reductase sthE. The short-chain dehydrogenase/reductase sthC then catalyzes reduction of dehydroprobetaenone I to probetaenone I. The cytochrome P450 monooxygenase sthF catalyzes successive epoxidation, oxidation (resulting from epoxide opening) and hydroxylation to install a tertiary alcohol in the decaline ring to yield betaenone C from dehydroprobetaenone I and betaenone B from probetaenone I. The FAD-linked oxidoreductase sthB is responsible for the conversion of betaenone C to betaenone A via an intramolecular aldol reaction between C-1 and C-17 to form the bridged tricyclic system in betaenone A. Finally, the cytochrome P450 monooxygenase sthD catalyzes the hydroxylation of C-15 to afford the final metabolite stemphyloxin II. This is FAD-linked oxidoreductase sthB from Phaeosphaeria nodorum (strain SN15 / ATCC MYA-4574 / FGSC 10173) (Glume blotch fungus).